The following is a 168-amino-acid chain: uncharacterized protein (168 aa).

The chain crosses the membrane as a helical span at residues 23–47 (LFARASIIGVALLLSACATVPMASV).

It localises to the membrane. This is an uncharacterized protein from Haemophilus influenzae (strain ATCC 51907 / DSM 11121 / KW20 / Rd).